The following is a 158-amino-acid chain: MRKAKPKKRQILPDPVFGDVKVTRFVNHLMYDGKKNTAFEIFYSALETVKGKLPNEEKSALEIWKAALDNITPQVEVKSRRVGGATFQVPTEIRPDRKESISMKNLIIFARKRGGKTMADKLSAEIVDAFNNQGGAFKRKEDMHRMAEANRAFAHFRF.

The protein belongs to the universal ribosomal protein uS7 family. In terms of assembly, part of the 30S ribosomal subunit. Contacts proteins S9 and S11.

In terms of biological role, one of the primary rRNA binding proteins, it binds directly to 16S rRNA where it nucleates assembly of the head domain of the 30S subunit. Is located at the subunit interface close to the decoding center, probably blocks exit of the E-site tRNA. This is Small ribosomal subunit protein uS7 from Parabacteroides distasonis (strain ATCC 8503 / DSM 20701 / CIP 104284 / JCM 5825 / NCTC 11152).